Reading from the N-terminus, the 283-residue chain is 1D-myo-inositol 2-acetamido-2-deoxy-alpha-D-glucopyranoside deacetylase (283 aa).

Zn(2+)-binding residues include His7, Asp10, and His148.

The protein belongs to the MshB deacetylase family. It depends on Zn(2+) as a cofactor.

The catalysed reaction is 1D-myo-inositol 2-acetamido-2-deoxy-alpha-D-glucopyranoside + H2O = 1D-myo-inositol 2-amino-2-deoxy-alpha-D-glucopyranoside + acetate. In terms of biological role, catalyzes the deacetylation of 1D-myo-inositol 2-acetamido-2-deoxy-alpha-D-glucopyranoside (GlcNAc-Ins) in the mycothiol biosynthesis pathway. The protein is 1D-myo-inositol 2-acetamido-2-deoxy-alpha-D-glucopyranoside deacetylase of Gordonia bronchialis (strain ATCC 25592 / DSM 43247 / BCRC 13721 / JCM 3198 / KCTC 3076 / NBRC 16047 / NCTC 10667) (Rhodococcus bronchialis).